The primary structure comprises 146 residues: Probable glycine cleavage system H protein 3 (146 aa).

The 83-residue stretch at 29–111 folds into the Lipoyl-binding domain; that stretch reads VVSVGMTDLG…PYGSWIIKVS (83 aa). N6-lipoyllysine is present on K71.

The protein belongs to the GcvH family. The glycine cleavage system is composed of four proteins: P, T, L and H. Requires (R)-lipoate as cofactor.

Its function is as follows. The glycine cleavage system catalyzes the degradation of glycine. The H protein shuttles the methylamine group of glycine from the P protein to the T protein. In Sulfolobus acidocaldarius (strain ATCC 33909 / DSM 639 / JCM 8929 / NBRC 15157 / NCIMB 11770), this protein is Probable glycine cleavage system H protein 3.